Reading from the N-terminus, the 137-residue chain is MLQPNRRKFRKEHKGRNEGLATRGTKVSFGEWGLKAIGRGRLTARQIEAARRAMTRHIKRGGRIWIRIFPDKPISKKPAEVRMGNGKGNPEYWVAEIQPGKVLYEMDGVNEALAREAFALAAAKLPIPTTFVTRHLG.

The segment covering 1-14 has biased composition (basic residues); the sequence is MLQPNRRKFRKEHK. The segment at 1–22 is disordered; it reads MLQPNRRKFRKEHKGRNEGLAT.

This sequence belongs to the universal ribosomal protein uL16 family. In terms of assembly, part of the 50S ribosomal subunit.

Its function is as follows. Binds 23S rRNA and is also seen to make contacts with the A and possibly P site tRNAs. The polypeptide is Large ribosomal subunit protein uL16 (Dechloromonas aromatica (strain RCB)).